Consider the following 111-residue polypeptide: Magnetosome protein MamF (111 aa).

The Cytoplasmic portion of the chain corresponds to 1-17; that stretch reads MAETILIETKTAGGNCR. A helical transmembrane segment spans residues 18–38; it reads SYLMAGASYLGILCFVPLLMS. Residues 39–50 are Lumenal-facing; it reads RDDEYVYFHAKQ. A helical transmembrane segment spans residues 51–71; that stretch reads GLVLWMWSILAMFALHLPGIG. Position 72 (K72) is a topological domain, cytoplasmic. The helical transmembrane segment at 73–93 threads the bilayer; that stretch reads WLFGFSSMGVLMLSVVGLVSV. At 94–111 the chain is on the lumenal side; that stretch reads ALRRTWRLPLISHVVALI.

This sequence belongs to the magnetosome MamF/MmsF protein family. In terms of assembly, may form homooligomers. Post-translationally, subject to cleavage or degradation; identified by N-terminal sequencing of proteins that are about 103, 92 and 15 kDa in size.

Its subcellular location is the magnetosome membrane. Functionally, plays a role in regulating magnetite crystal size; partially redundant function with MmsF. The protein is Magnetosome protein MamF of Magnetospirillum gryphiswaldense (strain DSM 6361 / JCM 21280 / NBRC 15271 / MSR-1).